Reading from the N-terminus, the 111-residue chain is BET1-like protein (111 aa).

The Cytoplasmic portion of the chain corresponds to 1 to 86 (MADWARAQSP…MARSGRDNRK (86 aa)). A phosphoserine mark is found at Ser9 and Ser37. In terms of domain architecture, t-SNARE coiled-coil homology spans 15–77 (EILDRENKRM…TGSVKRFSTM (63 aa)). A helical; Anchor for type IV membrane protein membrane pass occupies residues 87–107 (LLCGVAVGLIVAFFILSYLLS). Over 108-111 (RART) the chain is Lumenal.

In terms of assembly, component of a SNARE complex consisting of STX5, YKT6, GOSR1 and BET1L. Interacts with STX5.

The protein resides in the golgi apparatus membrane. The protein localises to the golgi apparatus. It is found in the trans-Golgi network membrane. Functionally, vesicle SNARE required for targeting and fusion of retrograde transport vesicles with the Golgi complex. Required for the integrity of the Golgi complex. The polypeptide is BET1-like protein (Bos taurus (Bovine)).